The following is a 291-amino-acid chain: 4-diphosphocytidyl-2-C-methyl-D-erythritol kinase (291 aa).

Lys-12 is an active-site residue. 95–105 (PDGGGLGGGSS) is an ATP binding site. Residue Asp-137 is part of the active site.

It belongs to the GHMP kinase family. IspE subfamily.

The enzyme catalyses 4-CDP-2-C-methyl-D-erythritol + ATP = 4-CDP-2-C-methyl-D-erythritol 2-phosphate + ADP + H(+). It functions in the pathway isoprenoid biosynthesis; isopentenyl diphosphate biosynthesis via DXP pathway; isopentenyl diphosphate from 1-deoxy-D-xylulose 5-phosphate: step 3/6. Its function is as follows. Catalyzes the phosphorylation of the position 2 hydroxy group of 4-diphosphocytidyl-2C-methyl-D-erythritol. This Alkalilimnicola ehrlichii (strain ATCC BAA-1101 / DSM 17681 / MLHE-1) protein is 4-diphosphocytidyl-2-C-methyl-D-erythritol kinase.